The chain runs to 940 residues: SWI/SNF-related matrix-associated actin-dependent regulator of chromatin subfamily A-like protein 1 (940 aa).

Residues 1 to 155 form a disordered region; it reads MSISPLKCPC…GQGHPQASLE (155 aa). At S2 the chain carries N-acetylserine. Mediates interaction with RPA2 stretches follow at residues 2 to 36 and 11 to 36; these read SISP…KLLA and LLQR…KLLA. Basic and acidic residues predominate over residues 17–40; sequence GKIEANRQKALARRAEKLLAEQHQ. Positions 18–40 form a coiled coil; the sequence is KIEANRQKALARRAEKLLAEQHQ. Polar residues-rich tracts occupy residues 41–53 and 68–95; these read KPAQ…SQNL and KQQN…TSEQ. Residues S125, S131, S153, and S200 each carry the phosphoserine modification. 2 consecutive HARP domains span residues 229 to 299 and 325 to 396; these read VVGS…QPLE and SLAF…DPLP. Residues 442-597 enclose the Helicase ATP-binding domain; sequence NFAIAQRGRL…YTQILAVRPT (156 aa). 455 to 462 serves as a coordination point for ATP; that stretch reads DDMGLGKT. The DESH box signature appears at 546–549; sequence DESH. Positions 641 to 658 match the Nuclear localization signal motif; that stretch reads RRLKGDVLSQLPAKQARW. Residues 662-682 are disordered; that stretch reads PQARSTPGPEPPWMPPPRMTT. Pro residues predominate over residues 669 to 679; that stretch reads GPEPPWMPPPR. One can recognise a Helicase C-terminal domain in the interval 708–864; it reads SIIEYILDLL…ETNFSEMTEA (157 aa). Positions 899–918 are disordered; sequence ESFDPGSQDTGDKLDESTLT.

This sequence belongs to the SNF2/RAD54 helicase family. SMARCAL1 subfamily. As to quaternary structure, interacts with RPA2; the interaction is direct and mediates the recruitment by the RPA complex of SMARCAL1 to sites of DNA damage. DNA damage-regulated phosphorylation by kinases that may include ATM, ATR and PRKDC. As to expression, expressed in mature oocytes, 2-4 cell stage embryos and 8-16 cell stage embryos. Expressed at lower levels in morulae and blastocysts.

It is found in the nucleus. The catalysed reaction is ATP + H2O = ADP + phosphate + H(+). Functionally, ATP-dependent annealing helicase that binds selectively to fork DNA relative to ssDNA or dsDNA and catalyzes the rewinding of the stably unwound DNA. Rewinds single-stranded DNA bubbles that are stably bound by replication protein A (RPA). Acts throughout the genome to reanneal stably unwound DNA, performing the opposite reaction of many enzymes, such as helicases and polymerases, that unwind DNA. May play an important role in DNA damage response by acting at stalled replication forks. The chain is SWI/SNF-related matrix-associated actin-dependent regulator of chromatin subfamily A-like protein 1 (SMARCAL1) from Bos taurus (Bovine).